A 420-amino-acid polypeptide reads, in one-letter code: Serine/threonine-protein phosphatase 4 regulatory subunit 2-A (420 aa).

The segment at 157-420 (GNTSAFPDRN…ETADDNMEQD (264 aa)) is disordered. The span at 182 to 195 (SLSSNVATNGLPDS) shows a compositional bias: polar residues. Residues 196–210 (TESKEQASEQSERTV) are compositionally biased toward basic and acidic residues. Residues 212-224 (ESSASEAESHSGA) are compositionally biased toward low complexity. The span at 229 to 250 (HRDDEDATHAETHEAKRLKFDK) shows a compositional bias: basic and acidic residues. A compositionally biased stretch (acidic residues) spans 251 to 266 (EEEEEEDDEEEDEDGD). Over residues 267–276 (EIKKELDEPH) the composition is skewed to basic and acidic residues. A compositionally biased stretch (polar residues) spans 278-296 (PCTSVAESSSDVPQSSTDV). Over residues 318–332 (GVDRSTSEDSPDPSH) the composition is skewed to basic and acidic residues. A compositionally biased stretch (acidic residues) spans 346 to 364 (AEEEEEEESAEAQETEETN). Residues 368 to 394 (SSSSNNSSDEGVSSAETPSASPSSSTE) show a composition bias toward low complexity. Positions 411 to 420 (ETADDNMEQD) are enriched in acidic residues.

Belongs to the PPP4R2 family. Serine/threonine-protein phosphatase 4 (PP4) occurs in different assemblies of the catalytic and one or more regulatory subunits.

Its function is as follows. Regulatory subunit of serine/threonine-protein phosphatase 4 (PP4C). The protein is Serine/threonine-protein phosphatase 4 regulatory subunit 2-A (ppp4r2a) of Danio rerio (Zebrafish).